A 64-amino-acid polypeptide reads, in one-letter code: uncharacterized protein (64 aa).

This is an uncharacterized protein from Methanothermobacter thermautotrophicus (strain ATCC 29096 / DSM 1053 / JCM 10044 / NBRC 100330 / Delta H) (Methanobacterium thermoautotrophicum).